We begin with the raw amino-acid sequence, 764 residues long: MSKAKDTGILRFDDTPLAATFPLVAIITSKVVGGVKIVGRKGLDSTEFSIVGTQDSLKGSYVIAKYLARTTPSLSLYGENALSASKIDEFIDKFAHLKSEKFNEFLKEMNEYLTLRAFLIGFNLTLADIVLFARIKMVKEIQEEINKLGKTIPHLNRWYGYLSQLESFVEADNAFNGKKETKASGKAGAEGTAATTEKVAPQKGAMGWVGNFEALNLPGLVEGKVVTRFPPEPSGYMHIGHCKAAIINNYYAEKYNGKIIIRFDDTNPSKEKEEYVENIIKDINNLGIKYEKITHTSDYFDLIHDYAIQMIKEGIAYCDDTPQVKMSEERDNAIESVHRNNSVEKNLEMFDEMKKATEQGVKCVLRAKLDMAHIDKAFRDPAIYRCNSTPHHRTGDKYKVYPLYDFACPIVDSVEGITHALRSNEYNNKRNLYNHYLEILHLENKPYISDYSRLSFFNVLLSKRKLQHFVDTGLVSGWTDPRLPTLQGITRRGLTVAALKEFILSQGASAANTTLDLGKLFVGNKAVLEPTCPRYTAIAKATAVKFTLSNGPTLPEVKDCLKYAKDPSMGTKKVTFSNNLLLEGDDCNQIKEGEEVTLMNWGNAIVETLQRNENGDVVSMTGKLHLEGDVKKTDKKLSWLSSDCADTVTVVLQDYDYIITKPKLEDGDDLDTFTNKNSKFEIEAFTDENILTLKLNDKIQFERRGFFNVDQVGDGVKPYILIYIPSGPIKPAGAALYPFKKVEKVAAPVNPKPTAKKQEKQSKK.

228 to 230 serves as a coordination point for L-glutamate; sequence RFP. A 'HIGH' region motif is present at residues 233 to 242; sequence PSGYMHIGHC. ATP is bound at residue His238. Residues Asp264, 404–408, and Arg422 contribute to the L-glutamate site; that span reads YDFAC. ATP-binding positions include Glu425 and 460–464; that span reads LLSKR. The 'KMSKS' region signature appears at 460-464; it reads LLSKR.

This sequence belongs to the class-I aminoacyl-tRNA synthetase family. Glutamate--tRNA ligase type 2 subfamily.

Its subcellular location is the cytoplasm. The catalysed reaction is tRNA(Glu) + L-glutamate + ATP = L-glutamyl-tRNA(Glu) + AMP + diphosphate. Its function is as follows. Catalyzes the attachment of glutamate to tRNA(Glu) in a two-step reaction: glutamate is first activated by ATP to form Glu-AMP and then transferred to the acceptor end of tRNA(Glu). This chain is Probable glutamate--tRNA ligase, cytoplasmic (gluS), found in Dictyostelium discoideum (Social amoeba).